The primary structure comprises 430 residues: Protein translocase subunit SecY (430 aa).

10 consecutive transmembrane segments (helical) span residues 18–38 (IFFT…PAPG), 68–88 (FSIF…MQLL), 117–137 (FAII…NNYL), 148–168 (MSYL…LWLG), 179–199 (GISI…LIQF), 215–235 (LQVA…VYVL), 270–290 (VIPV…TMFF), 308–328 (NIGM…YAFV), 368–388 (FVGS…TKFM), and 390–410 (LPQS…VAIE).

This sequence belongs to the SecY/SEC61-alpha family. Component of the Sec protein translocase complex. Heterotrimer consisting of SecY, SecE and SecG subunits. The heterotrimers can form oligomers, although 1 heterotrimer is thought to be able to translocate proteins. Interacts with the ribosome. Interacts with SecDF, and other proteins may be involved. Interacts with SecA.

The protein localises to the cell membrane. Its function is as follows. The central subunit of the protein translocation channel SecYEG. Consists of two halves formed by TMs 1-5 and 6-10. These two domains form a lateral gate at the front which open onto the bilayer between TMs 2 and 7, and are clamped together by SecE at the back. The channel is closed by both a pore ring composed of hydrophobic SecY resides and a short helix (helix 2A) on the extracellular side of the membrane which forms a plug. The plug probably moves laterally to allow the channel to open. The ring and the pore may move independently. The chain is Protein translocase subunit SecY from Staphylococcus carnosus (strain TM300).